We begin with the raw amino-acid sequence, 374 residues long: Pectate lyase 1 (374 aa).

Residues 1-22 form the signal peptide; that stretch reads MKYLLPSAAAGLLLLAAQPTMA. Cysteine 93 and cysteine 176 are oxidised to a cystine. Positions 150, 152, 187, and 191 each coordinate Ca(2+). Residue arginine 239 is part of the active site. An intrachain disulfide couples cysteine 350 to cysteine 373.

This sequence belongs to the polysaccharide lyase 1 family. PLADES subfamily. Ca(2+) is required as a cofactor.

The protein resides in the secreted. It carries out the reaction Eliminative cleavage of (1-&gt;4)-alpha-D-galacturonan to give oligosaccharides with 4-deoxy-alpha-D-galact-4-enuronosyl groups at their non-reducing ends.. It participates in glycan metabolism; pectin degradation; 2-dehydro-3-deoxy-D-gluconate from pectin: step 2/5. Involved in maceration and soft-rotting of plant tissue. This Pectobacterium atrosepticum (strain SCRI 1043 / ATCC BAA-672) (Erwinia carotovora subsp. atroseptica) protein is Pectate lyase 1 (pel1).